The chain runs to 108 residues: UPF0102 protein Shewmr4_3685 (108 aa).

Belongs to the UPF0102 family.

The sequence is that of UPF0102 protein Shewmr4_3685 from Shewanella sp. (strain MR-4).